We begin with the raw amino-acid sequence, 157 residues long: Putative tRNA (cytidine(34)-2'-O)-methyltransferase (157 aa).

S-adenosyl-L-methionine is bound by residues Ile79, Gly104, and Ile125.

The protein belongs to the class IV-like SAM-binding methyltransferase superfamily. RNA methyltransferase TrmH family. TrmL subfamily.

The protein localises to the cytoplasm. It carries out the reaction cytidine(34) in tRNA + S-adenosyl-L-methionine = 2'-O-methylcytidine(34) in tRNA + S-adenosyl-L-homocysteine + H(+). It catalyses the reaction 5-carboxymethylaminomethyluridine(34) in tRNA(Leu) + S-adenosyl-L-methionine = 5-carboxymethylaminomethyl-2'-O-methyluridine(34) in tRNA(Leu) + S-adenosyl-L-homocysteine + H(+). In terms of biological role, could methylate the ribose at the nucleotide 34 wobble position in tRNA. This chain is Putative tRNA (cytidine(34)-2'-O)-methyltransferase, found in Geobacillus stearothermophilus (Bacillus stearothermophilus).